A 251-amino-acid chain; its full sequence is uncharacterized protein (251 aa).

Helical transmembrane passes span 22-42 (FLGVIPLFFICFVFVIADIVI), 86-106 (FFLSAFAYIIFTFLGYNVILA), 120-140 (LASSVFLHVLAPIAFLVAGIV), 157-177 (LGYFMIYPLVYGLYLATIPYV), and 205-225 (IVAWPVVICFLFIYFPLSFLA).

Its subcellular location is the cell membrane. This is an uncharacterized protein from Mycoplasma pneumoniae (strain ATCC 29342 / M129 / Subtype 1) (Mycoplasmoides pneumoniae).